Here is a 32-residue protein sequence, read N- to C-terminus: Cruzioseptin-9 (32 aa).

Glutamine 29 carries the post-translational modification Glutamine amide. Residues 31–32 constitute a propeptide that is removed on maturation; the sequence is EQ.

As to expression, expressed by the skin glands.

It localises to the secreted. In terms of biological role, has antimicrobial activity. This Cruziohyla calcarifer (Splendid leaf frog) protein is Cruzioseptin-9.